The following is a 208-amino-acid chain: Uracil phosphoribosyltransferase (208 aa).

5-phospho-alpha-D-ribose 1-diphosphate contacts are provided by residues R78, R103, and 130-138; that span reads DPMLATGGS. Residues I193 and 198 to 200 each bind uracil; that span reads GDA. Position 199 (D199) interacts with 5-phospho-alpha-D-ribose 1-diphosphate.

Belongs to the UPRTase family. Requires Mg(2+) as cofactor.

It carries out the reaction UMP + diphosphate = 5-phospho-alpha-D-ribose 1-diphosphate + uracil. The protein operates within pyrimidine metabolism; UMP biosynthesis via salvage pathway; UMP from uracil: step 1/1. Its activity is regulated as follows. Allosterically activated by GTP. In terms of biological role, catalyzes the conversion of uracil and 5-phospho-alpha-D-ribose 1-diphosphate (PRPP) to UMP and diphosphate. The polypeptide is Uracil phosphoribosyltransferase (Colwellia psychrerythraea (strain 34H / ATCC BAA-681) (Vibrio psychroerythus)).